A 405-amino-acid chain; its full sequence is uncharacterized protein (405 aa).

This is an uncharacterized protein from Saimiri sciureus (Common squirrel monkey).